The following is a 280-amino-acid chain: UDP-3-O-acyl-N-acetylglucosamine deacetylase (280 aa).

Zn(2+)-binding residues include His-77, His-238, and Asp-242. His-265 acts as the Proton donor in catalysis.

It belongs to the LpxC family. It depends on Zn(2+) as a cofactor.

The enzyme catalyses a UDP-3-O-[(3R)-3-hydroxyacyl]-N-acetyl-alpha-D-glucosamine + H2O = a UDP-3-O-[(3R)-3-hydroxyacyl]-alpha-D-glucosamine + acetate. The protein operates within glycolipid biosynthesis; lipid IV(A) biosynthesis; lipid IV(A) from (3R)-3-hydroxytetradecanoyl-[acyl-carrier-protein] and UDP-N-acetyl-alpha-D-glucosamine: step 2/6. In terms of biological role, catalyzes the hydrolysis of UDP-3-O-myristoyl-N-acetylglucosamine to form UDP-3-O-myristoylglucosamine and acetate, the committed step in lipid A biosynthesis. The chain is UDP-3-O-acyl-N-acetylglucosamine deacetylase from Nostoc sp. (strain PCC 7120 / SAG 25.82 / UTEX 2576).